Here is a 314-residue protein sequence, read N- to C-terminus: Calcium homeostasis modulator protein 4 (314 aa).

The Cytoplasmic segment spans residues 1 to 14 (MCPTLNNIVSSLQR). The chain crosses the membrane as a helical span at residues 15–37 (NGIFINSLIAALTIGGQQLFSSS). Topologically, residues 38-48 (TFSCPCQVGKN) are extracellular. 2 disulfide bridges follow: Cys41-Cys131 and Cys43-Cys162. A helical membrane pass occupies residues 49–71 (FYYGSAFLVIPALILLVAGFALR). The Cytoplasmic portion of the chain corresponds to 72–103 (SQMWTITGEYCCSCAPPYRRISPLECKLACLR). Residues 104–129 (FFSITGRAVIAPLTWLAVTLLTGTYY) form a helical membrane-spanning segment. Topologically, residues 130–183 (ECAASEFASVDHYPMFDNVSASKREEILAGFPCCRSAPSDVILVRDEIALLHRY) are extracellular. Residues 184 to 207 (QSQMLGWILITLATIAALVSCCVA) traverse the membrane as a helical segment. Residues 208 to 314 (KCCSPLTSLQ…DRSRGIELKP (107 aa)) are Cytoplasmic-facing.

The protein belongs to the CALHM family. Oligomerizes to form decameric and undecameric channels. Two hemichannels can assemble in a tail-to-tail manner to form a gap junction. In terms of tissue distribution, placenta.

The protein resides in the cell membrane. In terms of biological role, may assemble to form gap junction channel-like structures involved in intercellular communication. Channel gating and ion conductance are likely regulated by membrane lipids rather than by membrane depolarization or extracellular calcium levels. This Homo sapiens (Human) protein is Calcium homeostasis modulator protein 4.